We begin with the raw amino-acid sequence, 291 residues long: N-acetylmannosamine kinase (291 aa).

ATP-binding positions include A5 to K12 and G132 to S139. Residues H156, C166, C168, and C173 each coordinate Zn(2+).

The protein belongs to the ROK (NagC/XylR) family. NanK subfamily. In terms of assembly, homodimer.

It catalyses the reaction an N-acyl-D-mannosamine + ATP = an N-acyl-D-mannosamine 6-phosphate + ADP + H(+). The protein operates within amino-sugar metabolism; N-acetylneuraminate degradation; D-fructose 6-phosphate from N-acetylneuraminate: step 2/5. In terms of biological role, catalyzes the phosphorylation of N-acetylmannosamine (ManNAc) to ManNAc-6-P. The chain is N-acetylmannosamine kinase from Shigella boydii serotype 18 (strain CDC 3083-94 / BS512).